Here is a 492-residue protein sequence, read N- to C-terminus: Aspartyl/glutamyl-tRNA(Asn/Gln) amidotransferase subunit B (492 aa).

This sequence belongs to the GatB/GatE family. GatB subfamily. As to quaternary structure, heterotrimer of A, B and C subunits.

The catalysed reaction is L-glutamyl-tRNA(Gln) + L-glutamine + ATP + H2O = L-glutaminyl-tRNA(Gln) + L-glutamate + ADP + phosphate + H(+). The enzyme catalyses L-aspartyl-tRNA(Asn) + L-glutamine + ATP + H2O = L-asparaginyl-tRNA(Asn) + L-glutamate + ADP + phosphate + 2 H(+). Functionally, allows the formation of correctly charged Asn-tRNA(Asn) or Gln-tRNA(Gln) through the transamidation of misacylated Asp-tRNA(Asn) or Glu-tRNA(Gln) in organisms which lack either or both of asparaginyl-tRNA or glutaminyl-tRNA synthetases. The reaction takes place in the presence of glutamine and ATP through an activated phospho-Asp-tRNA(Asn) or phospho-Glu-tRNA(Gln). The polypeptide is Aspartyl/glutamyl-tRNA(Asn/Gln) amidotransferase subunit B (Dehalococcoides mccartyi (strain ATCC BAA-2266 / KCTC 15142 / 195) (Dehalococcoides ethenogenes (strain 195))).